Here is a 175-residue protein sequence, read N- to C-terminus: Phosphopantetheine adenylyltransferase (175 aa).

Ser-10 lines the substrate pocket. ATP-binding positions include 10–11 (SF) and His-18. Lys-42, Leu-74, and Arg-88 together coordinate substrate. ATP-binding positions include 89–91 (GMR), Glu-99, and 124–130 (WIFTSSS).

This sequence belongs to the bacterial CoaD family. In terms of assembly, homohexamer. Mg(2+) serves as cofactor.

It is found in the cytoplasm. It carries out the reaction (R)-4'-phosphopantetheine + ATP + H(+) = 3'-dephospho-CoA + diphosphate. The protein operates within cofactor biosynthesis; coenzyme A biosynthesis; CoA from (R)-pantothenate: step 4/5. In terms of biological role, reversibly transfers an adenylyl group from ATP to 4'-phosphopantetheine, yielding dephospho-CoA (dPCoA) and pyrophosphate. This Desulfatibacillum aliphaticivorans protein is Phosphopantetheine adenylyltransferase.